A 498-amino-acid polypeptide reads, in one-letter code: POTE ankyrin domain family member A (498 aa).

ANK repeat units follow at residues 98–127 (KKRT…QLHV), 131–160 (KKRT…DPNL), 164–193 (YGNT…DIES), 197–226 (GGLT…NLNA), and 230–259 (FGRT…DVFS). A disordered region spans residues 289–410 (NQMPNNSSGN…SNEKNKVKSQ (122 aa)). The span at 290–302 (QMPNNSSGNSNPE) shows a compositional bias: polar residues. Residues 303–338 (QDLKLTSEEEPQRLKGSENSQHEKVTQEPDINKDCD) are compositionally biased toward basic and acidic residues. Polar residues predominate over residues 348–359 (HGSNNVGLSENL). The span at 392–406 (EEYHRPEKKSNEKNK) shows a compositional bias: basic and acidic residues. Positions 469 to 497 (EHLLELKNSHYEQLTVEVEQMENMVHVLQ) form a coiled coil.

This sequence belongs to the POTE family.

This is POTE ankyrin domain family member A (POTEA) from Homo sapiens (Human).